The sequence spans 74 residues: uncharacterized protein (74 aa).

This is an uncharacterized protein from Salmonella typhimurium.